Reading from the N-terminus, the 816-residue chain is Leucine--tRNA ligase (816 aa).

Positions 40 to 51 (SYPSGAQLHAGH) match the 'HIGH' region motif. A 'KMSKS' region motif is present at residues 576–580 (KMSKS). Residue Lys-579 participates in ATP binding.

It belongs to the class-I aminoacyl-tRNA synthetase family.

Its subcellular location is the cytoplasm. It carries out the reaction tRNA(Leu) + L-leucine + ATP = L-leucyl-tRNA(Leu) + AMP + diphosphate. The chain is Leucine--tRNA ligase from Clostridium beijerinckii (strain ATCC 51743 / NCIMB 8052) (Clostridium acetobutylicum).